The sequence spans 326 residues: NADH-specific methylglyoxal reductase (326 aa).

Residues 20 to 21 (TW) and D54 each bind NAD(+). The active-site Proton donor is Y59. Residues Q189, 217-222 (YSPLEQ), G291, and Q297 each bind NAD(+).

This sequence belongs to the aldo/keto reductase family. Aldo/keto reductase 11 subfamily. As to quaternary structure, monomer.

It carries out the reaction hydroxyacetone + NAD(+) = methylglyoxal + NADH + H(+). Functionally, catalyzes the NADH-dependent reduction of methylglyoxal (2-oxopropanal) in vitro. It is not known if this activity has physiological significance. Cannot use NADPH as a cosubstrate. Seems to play some role in intestinal colonization. This Escherichia coli (strain K12) protein is NADH-specific methylglyoxal reductase (ydjG).